We begin with the raw amino-acid sequence, 52 residues long: Insulin (52 aa).

Cystine bridges form between cysteine 7–cysteine 38, cysteine 19–cysteine 51, and cysteine 37–cysteine 42.

It belongs to the insulin family. As to quaternary structure, heterodimer of a B chain and an A chain linked by two disulfide bonds.

It is found in the secreted. In terms of biological role, insulin decreases blood glucose concentration. It increases cell permeability to monosaccharides, amino acids and fatty acids. It accelerates glycolysis, the pentose phosphate cycle, and glycogen synthesis in liver. The chain is Insulin (ins) from Acipenser gueldenstaedtii (Russian sturgeon).